Consider the following 429-residue polypeptide: Glutamate-1-semialdehyde 2,1-aminomutase 2 (429 aa).

Lys268 bears the N6-(pyridoxal phosphate)lysine mark.

The protein belongs to the class-III pyridoxal-phosphate-dependent aminotransferase family. HemL subfamily. As to quaternary structure, homodimer. The cofactor is pyridoxal 5'-phosphate.

The protein resides in the cytoplasm. The catalysed reaction is (S)-4-amino-5-oxopentanoate = 5-aminolevulinate. Its pathway is porphyrin-containing compound metabolism; protoporphyrin-IX biosynthesis; 5-aminolevulinate from L-glutamyl-tRNA(Glu): step 2/2. This is Glutamate-1-semialdehyde 2,1-aminomutase 2 from Bacillus anthracis (strain A0248).